The primary structure comprises 377 residues: MVLESTMVCVDNSEYMRNGDFLPTRLQAQQDAVNIVCHSKTRSNPENNVGLITLANDCEVLTTLTPDTGRILSKLHTVQPKGKITFCTGIRVAHLALKHRQGKNHKMRIIAFVGSPVEDNEKDLVKLAKRLKKEKVNVDIINFGEEEVNTEKLTAFVNTLNGKDGTGSHLVTVPPGPSLADALISSPILAGEGGAMLGLGASDFEFGVDPSADPELALALRVSMEEQRQRQEEEARRAAAASAAEAGIATTGTEDSDDALLKMTISQQEFGRTGLPDLSSMTEEEQIAYAMQMSLQGAEFGQAESADIDASSAMDTSEPAKEEDDYDVMQDPEFLQSVLENLPGVDPNNEAIRNAMGSLASQATKDGKKDKKEEDKK.

Positions 5-188 (STMVCVDNSE…LADALISSPI (184 aa)) constitute a VWFA domain. Residue lysine 122 forms a Glycyl lysine isopeptide (Lys-Gly) (interchain with G-Cter in SUMO2) linkage. Positions 197-262 (LGLGASDFEF…TEDSDDALLK (66 aa)) are interaction with UBQLN1. One can recognise a UIM 1 domain in the interval 211 to 230 (SADPELALALRVSMEEQRQR). Positions 216 to 220 (LALAL) are essential for ubiquitin-binding. Residues 224 to 237 (MEEQRQRQEEEARR) show a composition bias toward basic and acidic residues. The interval 224–255 (MEEQRQRQEEEARRAAAASAAEAGIATTGTED) is disordered. 2 positions are modified to phosphothreonine: threonine 250 and threonine 253. Serine 256 and serine 266 each carry phosphoserine. The UIM 2 domain occupies 282–301 (TEEEQIAYAMQMSLQGAEFG). The segment at 287-291 (IAYAM) is essential for ubiquitin-binding. 2 disordered regions span residues 300-327 (FGQA…DDYD) and 341-377 (NLPG…EDKK). A phosphoserine mark is found at serine 358 and serine 361. The span at 365–377 (KDGKKDKKEEDKK) shows a compositional bias: basic and acidic residues.

Belongs to the proteasome subunit S5A family. Component of the 19S proteasome regulatory particle complex. The 26S proteasome consists of a 20S core particle (CP) and two 19S regulatory subunits (RP). The regulatory particle is made of a lid composed of 9 subunits, a base containing 6 ATPases and few additional components including PSMD4. Interacts with NUB1. Interacts with SQSTM1. Interacts with UBQLN4. Interacts with UBE3A. Interacts with UBQLN1 (via ubiquitin-like domain). Interacts with DDI2.

Its function is as follows. Component of the 26S proteasome, a multiprotein complex involved in the ATP-dependent degradation of ubiquitinated proteins. This complex plays a key role in the maintenance of protein homeostasis by removing misfolded or damaged proteins, which could impair cellular functions, and by removing proteins whose functions are no longer required. Therefore, the proteasome participates in numerous cellular processes, including cell cycle progression, apoptosis, or DNA damage repair. PSMD4 acts as an ubiquitin receptor subunit through ubiquitin-interacting motifs and selects ubiquitin-conjugates for destruction. Displays a preferred selectivity for longer polyubiquitin chains. The polypeptide is 26S proteasome non-ATPase regulatory subunit 4 (PSMD4) (Homo sapiens (Human)).